The following is a 262-amino-acid chain: Ferric siderophore reductase (262 aa).

Residues cysteine 244, cysteine 245, cysteine 256, and cysteine 259 each coordinate [2Fe-2S] cluster.

As to quaternary structure, monomer. The cofactor is [2Fe-2S] cluster.

The protein localises to the cytoplasm. It localises to the cell inner membrane. Displays pH dependent redox properties. SufD is necessary for the stability of FhuF. Its function is as follows. Siderophore-iron reductase which is involved in iron removal from the hydroxamate-type siderophores coprogen, ferrichrome and ferrioxamine B after their transport into the cell. Binds both the iron-loaded and the apo forms of ferrichrome. The sequence is that of Ferric siderophore reductase (fhuF) from Escherichia coli (strain K12).